A 341-amino-acid chain; its full sequence is Pyrophosphate--fructose 6-phosphate 1-phosphotransferase (341 aa).

Gly10 is a binding site for diphosphate. Glu103 contributes to the Mg(2+) binding site. Substrate is bound by residues 125 to 127 (TID), Arg162, 169 to 171 (MGR), Glu221, Arg265, and 271 to 274 (HTQR). Asp127 serves as the catalytic Proton acceptor.

The protein belongs to the phosphofructokinase type A (PFKA) family. Mixed-substrate PFK group III subfamily. Homotetramer. It depends on Mg(2+) as a cofactor.

The protein localises to the cytoplasm. It carries out the reaction beta-D-fructose 6-phosphate + diphosphate = beta-D-fructose 1,6-bisphosphate + phosphate + H(+). It participates in carbohydrate degradation; glycolysis; D-glyceraldehyde 3-phosphate and glycerone phosphate from D-glucose: step 3/4. Non-allosteric. Functionally, catalyzes the phosphorylation of D-fructose 6-phosphate, the first committing step of glycolysis. Uses inorganic phosphate (PPi) as phosphoryl donor instead of ATP like common ATP-dependent phosphofructokinases (ATP-PFKs), which renders the reaction reversible, and can thus function both in glycolysis and gluconeogenesis. Consistently, PPi-PFK can replace the enzymes of both the forward (ATP-PFK) and reverse (fructose-bisphosphatase (FBPase)) reactions. The sequence is that of Pyrophosphate--fructose 6-phosphate 1-phosphotransferase from Amycolatopsis methanolica.